Consider the following 455-residue polypeptide: 2-succinylbenzoate--CoA ligase (455 aa).

It belongs to the ATP-dependent AMP-binding enzyme family. MenE subfamily.

It catalyses the reaction 2-succinylbenzoate + ATP + CoA = 2-succinylbenzoyl-CoA + AMP + diphosphate. The protein operates within quinol/quinone metabolism; 1,4-dihydroxy-2-naphthoate biosynthesis; 1,4-dihydroxy-2-naphthoate from chorismate: step 5/7. Its pathway is quinol/quinone metabolism; menaquinone biosynthesis. In terms of biological role, converts 2-succinylbenzoate (OSB) to 2-succinylbenzoyl-CoA (OSB-CoA). In Salmonella typhimurium (strain LT2 / SGSC1412 / ATCC 700720), this protein is 2-succinylbenzoate--CoA ligase.